Reading from the N-terminus, the 213-residue chain is Pyridoxine/pyridoxamine 5'-phosphate oxidase (213 aa).

Residues 9–12 and K67 each bind substrate; that span reads RLEY. FMN is bound by residues 62–67, 77–78, R83, K84, and Q106; these read RIVLLK and YT. Y124, R128, and S132 together coordinate substrate. Residues 141–142 and W185 each bind FMN; that span reads QS. 191-193 is a substrate binding site; sequence RLH. FMN is bound at residue R195.

The protein belongs to the pyridoxamine 5'-phosphate oxidase family. As to quaternary structure, homodimer. Requires FMN as cofactor.

The catalysed reaction is pyridoxamine 5'-phosphate + O2 + H2O = pyridoxal 5'-phosphate + H2O2 + NH4(+). The enzyme catalyses pyridoxine 5'-phosphate + O2 = pyridoxal 5'-phosphate + H2O2. Its pathway is cofactor metabolism; pyridoxal 5'-phosphate salvage; pyridoxal 5'-phosphate from pyridoxamine 5'-phosphate: step 1/1. It functions in the pathway cofactor metabolism; pyridoxal 5'-phosphate salvage; pyridoxal 5'-phosphate from pyridoxine 5'-phosphate: step 1/1. Its function is as follows. Catalyzes the oxidation of either pyridoxine 5'-phosphate (PNP) or pyridoxamine 5'-phosphate (PMP) into pyridoxal 5'-phosphate (PLP). This Chromobacterium violaceum (strain ATCC 12472 / DSM 30191 / JCM 1249 / CCUG 213 / NBRC 12614 / NCIMB 9131 / NCTC 9757 / MK) protein is Pyridoxine/pyridoxamine 5'-phosphate oxidase.